We begin with the raw amino-acid sequence, 74 residues long: Putative protein YozX (74 aa).

In Bacillus subtilis (strain 168), this protein is Putative protein YozX (yozX).